The chain runs to 741 residues: Nuclear pore complex protein Nup88 (741 aa).

Residue alanine 2 is modified to N-acetylalanine. Phosphoserine occurs at positions 35, 50, 379, 437, 442, and 517. A Phosphothreonine modification is found at threonine 525. Serine 540 carries the post-translational modification Phosphoserine. The stretch at 585–651 (EEIQRRVKLL…KLLHSFHSEL (67 aa)) forms a coiled coil. Serine 698 is subject to Phosphoserine.

As to quaternary structure, interacts with NUP214/CAN. Interacts with NUP62 and NUP98. As to expression, ubiquitous.

Its subcellular location is the nucleus. It localises to the nuclear pore complex. Its function is as follows. Component of nuclear pore complex. This is Nuclear pore complex protein Nup88 (NUP88) from Homo sapiens (Human).